The primary structure comprises 303 residues: Heme A synthase (303 aa).

Over M1 to K8 the chain is Cytoplasmic. A helical membrane pass occupies residues W9–T29. Over K30–S67 the chain is Extracellular. A disulfide bridge connects residues C37 and C44. E60 is an active-site residue. H63 serves as a coordination point for heme o. A helical membrane pass occupies residues A68–I88. At K89–P93 the chain is on the cytoplasmic side. A helical membrane pass occupies residues L94 to I114. Topologically, residues W115–H125 are extracellular. A heme o-binding site is contributed by H125. Residues F126–I146 traverse the membrane as a helical segment. Topologically, residues D147–R163 are cytoplasmic. The helical transmembrane segment at L164–H184 threads the bilayer. Residues A185 to R215 are Extracellular-facing. H214 provides a ligand contact to heme b. The chain crosses the membrane as a helical span at residues I216 to Y236. The Cytoplasmic portion of the chain corresponds to P237–Y244. Residues G245–M265 form a helical membrane-spanning segment. Residues T266 to L270 lie on the Extracellular side of the membrane. The chain crosses the membrane as a helical span at residues L271–I291. H276 provides a ligand contact to heme b. At M292–Q303 the chain is on the cytoplasmic side.

This sequence belongs to the COX15/CtaA family. Type 1 subfamily. As to quaternary structure, interacts with CtaB. Heme b is required as a cofactor.

Its subcellular location is the cell membrane. It carries out the reaction Fe(II)-heme o + 2 A + H2O = Fe(II)-heme a + 2 AH2. Its pathway is porphyrin-containing compound metabolism; heme A biosynthesis; heme A from heme O: step 1/1. Its function is as follows. Catalyzes the conversion of heme O to heme A by two successive hydroxylations of the methyl group at C8. The first hydroxylation forms heme I, the second hydroxylation results in an unstable dihydroxymethyl group, which spontaneously dehydrates, resulting in the formyl group of heme A. In Staphylococcus aureus (strain MSSA476), this protein is Heme A synthase.